The following is a 488-amino-acid chain: Cobyric acid synthase (488 aa).

Positions 254–442 (KFKIVVPVLP…VHGLFGMDTQ (189 aa)) constitute a GATase cobBQ-type domain. C336 serves as the catalytic Nucleophile. H434 is an active-site residue.

The protein belongs to the CobB/CobQ family. CobQ subfamily.

It participates in cofactor biosynthesis; adenosylcobalamin biosynthesis. Its function is as follows. Catalyzes amidations at positions B, D, E, and G on adenosylcobyrinic A,C-diamide. NH(2) groups are provided by glutamine, and one molecule of ATP is hydrogenolyzed for each amidation. The sequence is that of Cobyric acid synthase from Beijerinckia indica subsp. indica (strain ATCC 9039 / DSM 1715 / NCIMB 8712).